Here is a 226-residue protein sequence, read N- to C-terminus: Ribose-5-phosphate isomerase A (226 aa).

Substrate-binding positions include 28-31 (TGST), 83-86 (DGAD), and 97-100 (KGGG). The active-site Proton acceptor is E106. K124 is a substrate binding site.

The protein belongs to the ribose 5-phosphate isomerase family. Homotetramer.

The enzyme catalyses aldehydo-D-ribose 5-phosphate = D-ribulose 5-phosphate. It participates in carbohydrate biosynthesis; D-ribose 5-phosphate biosynthesis. In terms of biological role, catalyzes the reversible conversion of ribose-5-phosphate to ribulose 5-phosphate. The protein is Ribose-5-phosphate isomerase A of Methanocaldococcus jannaschii (strain ATCC 43067 / DSM 2661 / JAL-1 / JCM 10045 / NBRC 100440) (Methanococcus jannaschii).